The primary structure comprises 129 residues: Glycine cleavage system H protein (129 aa).

Residues 24–106 (SYTVGITEHA…YGEGWFFRVM (83 aa)) form the Lipoyl-binding domain. Position 65 is an N6-lipoyllysine (Lys-65).

The protein belongs to the GcvH family. In terms of assembly, the glycine cleavage system is composed of four proteins: P, T, L and H. (R)-lipoate is required as a cofactor.

The glycine cleavage system catalyzes the degradation of glycine. The H protein shuttles the methylamine group of glycine from the P protein to the T protein. The sequence is that of Glycine cleavage system H protein from Shewanella baltica (strain OS185).